Reading from the N-terminus, the 104-residue chain is Large ribosomal subunit protein uL24 (104 aa).

It belongs to the universal ribosomal protein uL24 family. As to quaternary structure, part of the 50S ribosomal subunit.

Functionally, one of two assembly initiator proteins, it binds directly to the 5'-end of the 23S rRNA, where it nucleates assembly of the 50S subunit. One of the proteins that surrounds the polypeptide exit tunnel on the outside of the subunit. This Shewanella piezotolerans (strain WP3 / JCM 13877) protein is Large ribosomal subunit protein uL24.